Reading from the N-terminus, the 538-residue chain is BTB/POZ domain-containing protein 6 (538 aa).

Residues Met1–Thr17 form the signal peptide. Disordered regions lie at residues Pro29–Lys53 and Ala76–Trp115. Over residues Ala35–Lys53 the composition is skewed to low complexity. Residues Arg85 to Pro103 show a composition bias toward pro residues. Residues Ala136–Ala206 enclose the BTB domain.

As to expression, expressed in lens.

The protein resides in the cytoplasm. Its function is as follows. Adapter protein for the cul3 E3 ubiquitin-protein ligase complex. Involved in late neuronal development and muscle formation. This is BTB/POZ domain-containing protein 6 from Homo sapiens (Human).